We begin with the raw amino-acid sequence, 256 residues long: 5-keto-4-deoxy-D-glucarate aldolase (256 aa).

H50 acts as the Proton acceptor in catalysis. Q151 serves as a coordination point for substrate. E153 contributes to the Mg(2+) binding site. Substrate is bound by residues S178 and D179. D179 is a Mg(2+) binding site.

It belongs to the HpcH/HpaI aldolase family. KDGluc aldolase subfamily. Homohexamer; trimer of dimers. Mg(2+) is required as a cofactor.

It catalyses the reaction 5-dehydro-4-deoxy-D-glucarate = 2-hydroxy-3-oxopropanoate + pyruvate. It carries out the reaction 2-dehydro-3-deoxy-D-glucarate = 2-hydroxy-3-oxopropanoate + pyruvate. It functions in the pathway carbohydrate acid metabolism; galactarate degradation; D-glycerate from galactarate: step 2/3. Catalyzes the reversible retro-aldol cleavage of both 5-keto-4-deoxy-D-glucarate and 2-keto-3-deoxy-D-glucarate to pyruvate and tartronic semialdehyde. The protein is 5-keto-4-deoxy-D-glucarate aldolase of Enterobacter sp. (strain 638).